The chain runs to 263 residues: Small ribosomal subunit protein eS4, Y isoform 2 (263 aa).

The S4 RNA-binding domain maps to Leu42–Asp104.

The protein belongs to the eukaryotic ribosomal protein eS4 family.

In Pan troglodytes (Chimpanzee), this protein is Small ribosomal subunit protein eS4, Y isoform 2 (RPS4Y2).